A 258-amino-acid chain; its full sequence is Acetylglutamate kinase (258 aa).

Residues 44 to 45 (GG), Arg-66, and Asn-158 contribute to the substrate site. ATP is bound by residues 181–186 (DVSGIL) and 209–211 (IIT).

Belongs to the acetylglutamate kinase family. ArgB subfamily. In terms of assembly, homodimer.

It is found in the cytoplasm. It carries out the reaction N-acetyl-L-glutamate + ATP = N-acetyl-L-glutamyl 5-phosphate + ADP. It participates in amino-acid biosynthesis; L-arginine biosynthesis; N(2)-acetyl-L-ornithine from L-glutamate: step 2/4. Its function is as follows. Catalyzes the ATP-dependent phosphorylation of N-acetyl-L-glutamate. This chain is Acetylglutamate kinase, found in Shigella sonnei (strain Ss046).